Reading from the N-terminus, the 401-residue chain is Argininosuccinate synthase (401 aa).

ATP is bound by residues 9–17 (AFSGGLDTS) and Ala35. L-citrulline-binding residues include Tyr88 and Ser93. Gly117 provides a ligand contact to ATP. Residues Thr119, Asn123, and Asp124 each contribute to the L-aspartate site. Asn123 contributes to the L-citrulline binding site. L-citrulline-binding residues include Arg127 and Tyr273.

The protein belongs to the argininosuccinate synthase family. Type 1 subfamily. Homotetramer.

The protein localises to the cytoplasm. It catalyses the reaction L-citrulline + L-aspartate + ATP = 2-(N(omega)-L-arginino)succinate + AMP + diphosphate + H(+). Its pathway is amino-acid biosynthesis; L-arginine biosynthesis; L-arginine from L-ornithine and carbamoyl phosphate: step 2/3. The polypeptide is Argininosuccinate synthase (Xylella fastidiosa (strain Temecula1 / ATCC 700964)).